A 262-amino-acid chain; its full sequence is Acyl-coenzyme A diphosphatase FITM2 (262 aa).

Topologically, residues 1 to 23 (MEHLERCAWFLRGTLVRATVRRH) are cytoplasmic. Residues 24 to 44 (LPWALVAAMLAGSVVKELSPL) form a helical membrane-spanning segment. The Lumenal portion of the chain corresponds to 45–57 (PESYLSNKRNVLN). Residues 58–78 (VYFVKLAWAWTVCLLLPFIAL) form a helical membrane-spanning segment. The Cytoplasmic segment spans residues 79 to 93 (TNYHLTGKTSLVLRR). The helical transmembrane segment at 94 to 114 (LSTLLVGTAIWYICTALFSNI) threads the bilayer. At 115-145 (EHYTGSCYQSPALEGIRQEHRSKQQCHREGG) the chain is on the lumenal side. The helical transmembrane segment at 146-166 (FWHGFDISGHSFLLTFCALMI) threads the bilayer. Residue histidine 155 is part of the active site. Topologically, residues 167–190 (VEEMAVLHEVKTDRGHHLHAAITT) are cytoplasmic. A helical transmembrane segment spans residues 191–211 (LVVALGFLTFIWVWMFLCTAV). Residues 212–218 (YFHDLTQ) lie on the Lumenal side of the membrane. Residue histidine 214 is part of the active site. Residues 219-239 (KVFGTMFGLLGWYGTYGYWYL) form a helical membrane-spanning segment. Residues 240–262 (KSFSPGLPPQSCSLTLKRDTYKK) lie on the Cytoplasmic side of the membrane.

It belongs to the FIT family. As to expression, widely expressed, with highest levels in white and brown adipose tissues (at protein level). In the heart, mRNA expression levels do not correlate well with protein levels, suggesting post-transcriptional regulation in this organ.

Its subcellular location is the endoplasmic reticulum membrane. The enzyme catalyses an acyl-CoA + H2O = an acyl-4'-phosphopantetheine + adenosine 3',5'-bisphosphate + 2 H(+). It catalyses the reaction (9Z)-octadecenoyl-CoA + H2O = S-(9Z-octadecenoyl)-4'-phosphopantetheine + adenosine 3',5'-bisphosphate + 2 H(+). It carries out the reaction (5Z,8Z,11Z,14Z)-eicosatetraenoyl-CoA + H2O = S-(5Z,8Z,11Z,14Z-eicosatetraenoyl)-4'-phosphopantetheine + adenosine 3',5'-bisphosphate + 2 H(+). The catalysed reaction is hexadecanoyl-CoA + H2O = S-hexadecanoyl-4'-phosphopantetheine + adenosine 3',5'-bisphosphate + 2 H(+). In terms of biological role, fatty acyl-coenzyme A (CoA) diphosphatase that hydrolyzes fatty acyl-CoA to yield acyl-4'-phosphopantetheine and adenosine 3',5'-bisphosphate. Preferentially hydrolyzes unsaturated long-chain acyl-CoA substrates such as oleoyl-CoA/(9Z)-octadecenoyl-CoA and arachidonoyl-CoA/(5Z,8Z,11Z,14Z)-eicosatetraenoyl-CoA in the endoplasmic reticulum (ER) lumen. This catalytic activity is required for maintaining ER structure and for lipid droplets (LDs) biogenesis, which are lipid storage organelles involved in maintaining lipid and energy homeostasis. Directly binds to diacylglycerol (DAGs) and triacylglycerol, which is also important for LD biogenesis. May support directional budding of nacent LDs from the ER into the cytosol by reducing DAG levels at sites of LD formation. Plays a role in the regulation of cell morphology and cytoskeletal organization. The chain is Acyl-coenzyme A diphosphatase FITM2 from Mus musculus (Mouse).